Consider the following 130-residue polypeptide: Ribosome-binding factor A (130 aa).

The interval Arg111–Arg130 is disordered.

This sequence belongs to the RbfA family. As to quaternary structure, monomer. Binds 30S ribosomal subunits, but not 50S ribosomal subunits or 70S ribosomes.

It is found in the cytoplasm. In terms of biological role, one of several proteins that assist in the late maturation steps of the functional core of the 30S ribosomal subunit. Associates with free 30S ribosomal subunits (but not with 30S subunits that are part of 70S ribosomes or polysomes). Required for efficient processing of 16S rRNA. May interact with the 5'-terminal helix region of 16S rRNA. This chain is Ribosome-binding factor A, found in Xanthomonas euvesicatoria pv. vesicatoria (strain 85-10) (Xanthomonas campestris pv. vesicatoria).